A 308-amino-acid polypeptide reads, in one-letter code: UDP-N-acetylenolpyruvoylglucosamine reductase 2 (308 aa).

The FAD-binding PCMH-type domain occupies 31 to 197 (RIGGPADYLV…AEVVMALRPA (167 aa)). Arginine 176 is a catalytic residue. Residue serine 226 is the Proton donor of the active site. The active site involves glutamate 296.

It belongs to the MurB family. FAD is required as a cofactor.

It localises to the cytoplasm. The catalysed reaction is UDP-N-acetyl-alpha-D-muramate + NADP(+) = UDP-N-acetyl-3-O-(1-carboxyvinyl)-alpha-D-glucosamine + NADPH + H(+). The protein operates within cell wall biogenesis; peptidoglycan biosynthesis. Its function is as follows. Cell wall formation. The protein is UDP-N-acetylenolpyruvoylglucosamine reductase 2 of Symbiobacterium thermophilum (strain DSM 24528 / JCM 14929 / IAM 14863 / T).